Here is a 636-residue protein sequence, read N- to C-terminus: Sodium-dependent multivitamin transporter (636 aa).

A run of 12 helical transmembrane segments spans residues 24-44 (FSLV…AIGL), 68-88 (CLPV…ILGV), 101-121 (FLGC…IPVF), 143-163 (ICGT…VLYA), 176-196 (LWLS…LGGL), 199-219 (VIWT…AVII), 256-276 (FWTL…VNQA), 297-317 (VFPC…VMFA), 336-356 (FVLY…GLFV), 404-424 (FGYG…GPVL), 428-448 (ISIF…GMFF), and 456-476 (AIVG…GSIV). N-linked (GlcNAc...) asparagine glycans are attached at residues Asn489 and Asn498. The helical transmembrane segment at 528–548 (LWYSAHNSTTVIVVGLIVSLL) threads the bilayer. Residues 606–627 (LRASGDKEPMTEASPVHQGTSP) form a disordered region.

It belongs to the sodium:solute symporter (SSF) (TC 2.A.21) family. In terms of assembly, interacts with PDZD11.

The protein resides in the cell membrane. The protein localises to the apical cell membrane. It catalyses the reaction biotin(out) + 2 Na(+)(out) = biotin(in) + 2 Na(+)(in). The catalysed reaction is (R)-pantothenate(out) + 2 Na(+)(out) = (R)-pantothenate(in) + 2 Na(+)(in). It carries out the reaction (R)-lipoate(out) + 2 Na(+)(out) = (R)-lipoate(in) + 2 Na(+)(in). The enzyme catalyses iodide(out) + 2 Na(+)(out) = iodide(in) + 2 Na(+)(in). In terms of biological role, sodium-dependent multivitamin transporter that mediates the electrogenic transport of pantothenate, biotin, lipoate and iodide. Functions as a Na(+)-coupled substrate symporter where the stoichiometry of Na(+):substrate is 2:1, creating an electrochemical Na(+) gradient used as driving force for substrate uptake. Required for biotin and pantothenate uptake in the intestine across the brush border membrane. Plays a role in the maintenance of intestinal mucosa integrity, by providing the gut mucosa with biotin. Contributes to the luminal uptake of biotin and pantothenate into the brain across the blood-brain barrier. This Oryctolagus cuniculus (Rabbit) protein is Sodium-dependent multivitamin transporter (SLC5A6).